The sequence spans 403 residues: Nucleolar protein 13 (403 aa).

Basic and acidic residues-rich tracts occupy residues 1–35 and 75–97; these read MSETELSKEDAVTKKDNEEQVKKALLDPTKKRKAE and KSIEEYKEDAEKKKSGASEKDAQ. Disordered stretches follow at residues 1–43 and 72–116; these read MSET…IDLK and IDPK…EVVK. Ser-2 is modified (N-acetylserine). Residue Ser-2 is modified to Phosphoserine. A compositionally biased stretch (polar residues) spans 99–108; that stretch reads EESTINTPTG. Thr-105 is subject to Phosphothreonine. RRM domains lie at 125-219 and 239-317; these read YGVW…DSEN and RILF…YGED. The segment covering 313 to 329 has biased composition (basic and acidic residues); that stretch reads EYGEDRSKRQVRKKVEN. Positions 313–403 are disordered; it reads EYGEDRSKRQ…PSQGKKVKFD (91 aa). The segment covering 330-344 has biased composition (polar residues); sequence VSRNNSSSFDISNNK. Ser-335 is subject to Phosphoserine. Basic and acidic residues predominate over residues 345 to 361; it reads GYDRAGQDNGSKPEYKR. Residues 371–381 are compositionally biased toward polar residues; sequence DSNNRTKSSVA.

It is found in the nucleus. The protein resides in the nucleolus. This Saccharomyces cerevisiae (strain ATCC 204508 / S288c) (Baker's yeast) protein is Nucleolar protein 13 (NOP13).